The following is a 103-amino-acid chain: MYAVFQSGGKQHRVSEGQVVRLEKLELATGETVEFDSVLMVVNGEDVKIGAPVVSGAKVVAEVVAQGRGDKVKIVKFRRRKHSRKQQGHRQWFTEVKITGIQA.

It belongs to the bacterial ribosomal protein bL21 family. Part of the 50S ribosomal subunit. Contacts protein L20.

Its function is as follows. This protein binds to 23S rRNA in the presence of protein L20. The sequence is that of Large ribosomal subunit protein bL21 from Actinobacillus succinogenes (strain ATCC 55618 / DSM 22257 / CCUG 43843 / 130Z).